Reading from the N-terminus, the 65-residue chain is UPF0434 protein HSM_0997 (65 aa).

Belongs to the UPF0434 family.

The protein is UPF0434 protein HSM_0997 of Histophilus somni (strain 2336) (Haemophilus somnus).